The primary structure comprises 212 residues: Urease accessory protein UreG (212 aa).

15 to 22 lines the GTP pocket; it reads GPVGSGKT.

Belongs to the SIMIBI class G3E GTPase family. UreG subfamily. As to quaternary structure, homodimer. UreD, UreF and UreG form a complex that acts as a GTP-hydrolysis-dependent molecular chaperone, activating the urease apoprotein by helping to assemble the nickel containing metallocenter of UreC. The UreE protein probably delivers the nickel.

It is found in the cytoplasm. Its function is as follows. Facilitates the functional incorporation of the urease nickel metallocenter. This process requires GTP hydrolysis, probably effectuated by UreG. This chain is Urease accessory protein UreG, found in Opitutus terrae (strain DSM 11246 / JCM 15787 / PB90-1).